Here is a 143-residue protein sequence, read N- to C-terminus: Boletus edulis lectin (143 aa).

Residues A30, 49-50, and 72-73 each bind beta-D-Gal-(1-&gt;3)-alpha-D-GalNAc; these read SG and HN. Residues 49-50 and 72-73 contribute to the N-acetyl-alpha-D-galactosamine site; these read SG and HN. Residues 79–82, R103, and Y114 contribute to the N,N'-diacetylchitobiose site; that span reads DVVT. N-acetyl-alpha-D-glucosamine is bound by residues 79–82, R103, and Y114; that span reads DVVT.

This sequence belongs to the fungal fruit body lectin family. As to quaternary structure, homotetramer.

Lectin that recognizes O-linked galactose-beta-1,3-N-acetylgalactosamine, a disaccharide (Thomsen-Friedenreich antigen or T-disaccharide), present on cell surface glycoproteins. Can also bind chitin, N,N'-diacetylchitobiose, N-acetylgalactosamine and N-acetylglucosamine. Inhibits proliferation of colon, breast and liver cancer cell lines (in vitro). This Boletus edulis (King bolete) protein is Boletus edulis lectin.